Here is a 438-residue protein sequence, read N- to C-terminus: MVLLYTPKQKTKNVQTITADILDLDYQGLGVAKINGKTWFIENALPHEKVECRILEDKRQYGHAIVKKWRVKSPERLEPKCAHFMRCGGCQGQHIPIEMQRKAKESALFKRLSKLQSEPISFQPMICGDAWAYRRRVRLSLWFNPSTKQIEMGFRQKNTNDLIPVQSCEVAEPAINYLLPKLTALLEKFSAPKQLGHIELVAADNGVAMLLRYTKNLAEIDRTLLLKFAEQEKLMLFLQSDKGIEQIYGDAPYYQFSDGIKLHFDIRDFIQVNSALNEPMVNTALDWLELSQQDCVLDLFCGMGNFTLPLAKRVKSAVGIEGVFEMVQKAAQNAERNQIKNIEFFQADLDQSFVEQPWANQSFNKILLDPPRSGAAFALNALCELKAEKILYVSCNPATLVRDAEILCNFGYKIEKSAVIDMFPHTGHLESITLFTTK.

In terms of domain architecture, TRAM spans 10–68 (KTKNVQTITADILDLDYQGLGVAKINGKTWFIENALPHEKVECRILEDKRQYGHAIVKK). Residues Cys-81, Cys-87, Cys-90, and Cys-168 each coordinate [4Fe-4S] cluster. S-adenosyl-L-methionine-binding residues include Gln-271, Phe-300, Asn-305, Glu-321, Asp-348, and Asp-369. The active-site Nucleophile is the Cys-395.

The protein belongs to the class I-like SAM-binding methyltransferase superfamily. RNA M5U methyltransferase family. RlmD subfamily.

It catalyses the reaction uridine(1939) in 23S rRNA + S-adenosyl-L-methionine = 5-methyluridine(1939) in 23S rRNA + S-adenosyl-L-homocysteine + H(+). Its function is as follows. Catalyzes the formation of 5-methyl-uridine at position 1939 (m5U1939) in 23S rRNA. The chain is 23S rRNA (uracil(1939)-C(5))-methyltransferase RlmD from Haemophilus influenzae (strain ATCC 51907 / DSM 11121 / KW20 / Rd).